The primary structure comprises 87 residues: U3-theraphotoxin-Hhn1a 15 (87 aa).

The signal sequence occupies residues 1-24; that stretch reads MVNMKASMFLTFAGLVLLLVVCYA. The propeptide occupies 25 to 52; that stretch reads SESEEKEFPKEMLSSIFAVDNDFKQEER. Intrachain disulfides connect Cys54–Cys67, Cys61–Cys72, and Cys66–Cys79.

This sequence belongs to the neurotoxin 10 (Hwtx-1) family. 51 (Hntx-8) subfamily. Hntx-8 sub-subfamily. As to expression, expressed by the venom gland.

It localises to the secreted. In terms of biological role, ion channel inhibitor. The chain is U3-theraphotoxin-Hhn1a 15 from Cyriopagopus hainanus (Chinese bird spider).